We begin with the raw amino-acid sequence, 168 residues long: Phosphopantetheine adenylyltransferase (168 aa).

A substrate-binding site is contributed by threonine 14. Residues 14-15 (TF) and histidine 22 contribute to the ATP site. Residues lysine 46, leucine 78, and arginine 92 each contribute to the substrate site. Residues 93–95 (GLR), glutamate 103, and 128–134 (YSFISSS) contribute to the ATP site.

The protein belongs to the bacterial CoaD family. Homohexamer. Mg(2+) is required as a cofactor.

The protein resides in the cytoplasm. The catalysed reaction is (R)-4'-phosphopantetheine + ATP + H(+) = 3'-dephospho-CoA + diphosphate. It participates in cofactor biosynthesis; coenzyme A biosynthesis; CoA from (R)-pantothenate: step 4/5. Its function is as follows. Reversibly transfers an adenylyl group from ATP to 4'-phosphopantetheine, yielding dephospho-CoA (dPCoA) and pyrophosphate. This is Phosphopantetheine adenylyltransferase from Xanthomonas axonopodis pv. citri (strain 306).